Consider the following 122-residue polypeptide: Large ribosomal subunit protein uL14 (122 aa).

The protein belongs to the universal ribosomal protein uL14 family. In terms of assembly, part of the 50S ribosomal subunit. Forms a cluster with proteins L3 and L19. In the 70S ribosome, L14 and L19 interact and together make contacts with the 16S rRNA in bridges B5 and B8.

In terms of biological role, binds to 23S rRNA. Forms part of two intersubunit bridges in the 70S ribosome. In Novosphingobium aromaticivorans (strain ATCC 700278 / DSM 12444 / CCUG 56034 / CIP 105152 / NBRC 16084 / F199), this protein is Large ribosomal subunit protein uL14.